The sequence spans 361 residues: Epoxyqueuosine reductase (361 aa).

D147 acts as the Proton donor in catalysis. The region spanning 193-222 (VDPAMDSEHCGRCSACLDICPTAAFVGPYR) is the 4Fe-4S ferredoxin-type domain. Residues C202, C205, C208, C212, C228, C255, C258, and C262 each contribute to the [4Fe-4S] cluster site.

Belongs to the QueG family. In terms of assembly, monomer. The cofactor is cob(II)alamin. [4Fe-4S] cluster is required as a cofactor.

It is found in the cytoplasm. It carries out the reaction epoxyqueuosine(34) in tRNA + AH2 = queuosine(34) in tRNA + A + H2O. The protein operates within tRNA modification; tRNA-queuosine biosynthesis. In terms of biological role, catalyzes the conversion of epoxyqueuosine (oQ) to queuosine (Q), which is a hypermodified base found in the wobble positions of tRNA(Asp), tRNA(Asn), tRNA(His) and tRNA(Tyr). This chain is Epoxyqueuosine reductase, found in Pseudomonas aeruginosa (strain ATCC 15692 / DSM 22644 / CIP 104116 / JCM 14847 / LMG 12228 / 1C / PRS 101 / PAO1).